Consider the following 241-residue polypeptide: Large ribosomal subunit protein uL3 (241 aa).

Glutamine 157 is subject to N5-methylglutamine.

This sequence belongs to the universal ribosomal protein uL3 family. As to quaternary structure, part of the 50S ribosomal subunit. Forms a cluster with proteins L14 and L19. Post-translationally, methylated by PrmB.

Its function is as follows. One of the primary rRNA binding proteins, it binds directly near the 3'-end of the 23S rRNA, where it nucleates assembly of the 50S subunit. The sequence is that of Large ribosomal subunit protein uL3 from Vesicomyosocius okutanii subsp. Calyptogena okutanii (strain HA).